Consider the following 87-residue polypeptide: UPF0367 protein P9303_26451 (87 aa).

The protein belongs to the UPF0367 family.

The chain is UPF0367 protein P9303_26451 from Prochlorococcus marinus (strain MIT 9303).